Reading from the N-terminus, the 539-residue chain is Glutamate/serine transporter AimA (539 aa).

13 consecutive transmembrane segments (helical) span residues 11–31 (FSLM…FGAW), 36–56 (IAGP…LFIA), 82–102 (SFIG…VIPV), 137–157 (AFAS…VNLF), 164–184 (ITIF…FVGF), 199–219 (GWAS…FNGF), 238–258 (IAVV…QIAF), 283–303 (LAIA…AFVS), 350–370 (LIVS…AEII), 401–421 (LKGL…VLYW), 424–444 (WPLT…YFYY), 457–477 (FKAG…SYLG), and 486–506 (VIHY…FYVW).

Belongs to the amino acid-polyamine-organocation (APC) superfamily. AGT (TC 2.A.3.11) family.

The protein resides in the cell membrane. Major glutamate and serine transporter. Cannot transport threonine. AimA is the major glutamate transporter under standard growth conditions when glutamate is not limiting in the medium. This chain is Glutamate/serine transporter AimA, found in Bacillus subtilis (strain 168).